Reading from the N-terminus, the 215-residue chain is MASRGATRPNGPNTGNKICQFKLVLLGESAVGKSSLVLRFVKGQFHEFQESTIGAAFLTQTVCLDDTTVKFEIWDTAGQERYHSLAPMYYRGAQAAIVVYDITNEESFARAKNWVKELQRQASPNIVIALSGNKADLANKRAVDFQEAQSYADDNSLLFMETSAKTSMNVNEIFMAIAKKLPKNEPQNPGANSARGRGVDLTEPTQPTRNQCCSN.

GTP contacts are provided by serine 29, alanine 30, glycine 32, lysine 33, serine 34, serine 35, histidine 46, glutamate 47, threonine 52, and glycine 78. Residue serine 34 coordinates Mg(2+). Short sequence motifs (switch) lie at residues 44 to 56 (QFHEFQESTIGAA) and 77 to 93 (AGQERYHSLAPMYYRGA). Position 52 (threonine 52) interacts with Mg(2+). Serine 84 bears the Phosphoserine; by LRRK2 mark. Residue arginine 120 is glycosylated ((Microbial infection) N-beta-linked (GlcNAc) arginine). GTP contacts are provided by asparagine 133, lysine 134, aspartate 136, alanine 164, and lysine 165. The interval 181-215 (LPKNEPQNPGANSARGRGVDLTEPTQPTRNQCCSN) is disordered. A compositionally biased stretch (polar residues) spans 203–215 (EPTQPTRNQCCSN). 2 S-geranylgeranyl cysteine lipidation sites follow: cysteine 212 and cysteine 213.

It belongs to the small GTPase superfamily. Rab family. Interacts with SGSM1 and SGSM3. Interacts with PIK3CB. Interacts with GDI1; this promotes dissociation from membranes; phosphorylation at Ser-84 disrupts this interaction. Interacts with GDI2; phosphorylation at Ser-84 disrupts the interaction. Interacts with EEA1. Interacts with RIN1 and GAPVD1, which regulate its pathway, probably by acting as a GEF. Interacts with RINL. Interacts with ALS2CL, SUN2, ZFYVE20 and RUFY1. Interacts with RABEP1; one RABEP1 homodimer binds two RAB5A chains, but at opposite sides of the dimer. Interacts with OCRL. Interacts with INPP5F. May be a component of a complex composed of RAB5A, DYN2 and PIK3C3. Does not interact with BLOC-3 complex (heterodimer of HPS1 and HPS4). Interacts with CLN5. Interacts with APPL2. Interacts with F8A1/F8A2/F8A3. Found in a complex with F8A1/F8A2/F8A3, HTT and RAB5A; mediates the recruitment of HTT by RAB5A onto early endosomes. Interacts with ATP9A. Interacts with PPP1R21; mediates the recruitment of FERRY complex by RAB5A onto early endosomes. Requires Mg(2+) as cofactor. Post-translationally, phosphorylation of Ser-84 in the switch II region by LRRK2 prevents the association of RAB regulatory proteins, including RAB GDP dissociation inhibitors GDI1 and GDI2. In terms of processing, (Microbial infection) Glycosylated on arginine residues by S.typhimurium protein Ssek3.

Its subcellular location is the cell membrane. The protein resides in the early endosome membrane. The protein localises to the melanosome. It localises to the cytoplasmic vesicle. It is found in the cell projection. Its subcellular location is the ruffle. The protein resides in the membrane. The protein localises to the cytoplasm. It localises to the cytosol. It is found in the phagosome membrane. Its subcellular location is the endosome membrane. The enzyme catalyses GTP + H2O = GDP + phosphate + H(+). With respect to regulation, regulated by guanine nucleotide exchange factors (GEFs) including RINL, which promote the exchange of bound GDP for free GTP. Regulated by GTPase activating proteins (GAPs) which increase the GTP hydrolysis activity. Inhibited by GDP dissociation inhibitors (GDIs). Its function is as follows. The small GTPases Rab are key regulators of intracellular membrane trafficking, from the formation of transport vesicles to their fusion with membranes. Rabs cycle between an inactive GDP-bound form and an active GTP-bound form that is able to recruit to membranes different sets of downstream effectors directly responsible for vesicle formation, movement, tethering and fusion. RAB5A is required for the fusion of plasma membranes and early endosomes. Contributes to the regulation of filopodia extension. Required for the exosomal release of SDCBP, CD63, PDCD6IP and syndecan. Regulates maturation of apoptotic cell-containing phagosomes, probably downstream of DYN2 and PIK3C3. The chain is Ras-related protein Rab-5A from Homo sapiens (Human).